The primary structure comprises 2496 residues: MVDLSQTSPGRPVCLVFGPQIAEIDESLFYISRNIDENPALHFLKDVLRELPSLWSTISDTWAPLSSIPGAAQLTALADCVQGGPIATHENPTNVLLTPLTVIRQIIDAWKFKEKSQNKCRIMDAQGFCVGFLAAVAVACSNDAKEFADIASTMVRLAVCIGTAVDLDGISHGQARSVAVRWKSASENEQLNRLLTSSSTAYVSCFTDTNSATVTVAEDAVDDLIKELGSHGLSVKIIDLKGRFHHASHITAVQYLSSLCDTDDRLRLAGTGTCVLPLRSNVDGHLIGKISDIHKIALESILTKPSQWAMTVSAAVEHSRETNDDLSLAAIGTGQFVPRLVRNRVLDHTNNSLWDTKHEMLPNGIHKSSFPTESMQSTNMAAMAGTATPIAITGMGCRYAQADSPEQLWEMLELGQCGVSALPNERFKMDKLRREPKGPFWGNYLANPDVFDHRFFGISAREADAMDPQQRLLLQVGYEAMESAGYCGLRNPNVPTDIGCYVGVGSDDYTENVGSTHANAFSATGTLQAFCTGRLSHYFGWTGPSVVVDTACSSAAVSIHLACKALQTNECSIAVAGGVNVMTSPRVTQNLAAASFLSPTGASKAFDATANGYCRGEGAGLVVLRPLADAIRNGDPILAVIGGSAVNQGSNCSPITVPDSNSQRSLYRKALLASGIPPEDVTYVEAHGTGTQVGDPIEFDSIRKAFGGPGRSEKLHVGSIKDNIGHTETASGVAGLLKTVLMMQKQQIPKQANFVQLNPKIPALDDAEIAIPTKSIHWPSAATSSSNAVAMVTNYGAAGSNAALVVKQYKAPSEPSNRASLLPSEVPIILAANSVESLRSYCKVLLPSVRNAQLGSCQDIAYNLAVKQSRDMDYISTLTVPADQPNELIAKLESMSTETTNPKKQPSSRLPVILCFGGQNGNETTLSEDLFNQCELLQYHLMECEKVCRTRDLPSLFPRIFQTGPIEDTVSLHCILFSIQYASAMSWISSGLQVDRIIGHSFGQLTGLCVAGGLNLSDALYLVSERARMIQSMWGSERGAMLLVEGTEADVQSLLNRATQQMADAAVDVACVNGPRNIILAGDERSLQMIQKLSAETPSILRTKRLKNTHAFHSRLVDSIVPSLSKVAQQLQYTPLSIPLEACWQDGDWSFVSPDKIVAHSRGRVDFQTAVERVAQRIQGPAIWLEAGSASPIIPLVRRVIDTVTASSKDHLYQSLDLGGPQGQKNLSQATCNLWSRGAKVQFWQFHGSQAKSYNWINLPPYQFAQTRHWIAYDPNAFAPLPEDKPTVPSSGGPKEFVQLLTKQPTECVFAINTKDHLYQECTQGHAVLDQNLCPASLYFEVIVRAAGLVRPENDTSPSMPHLQNLAISAPLVLNPTGNVLLSLTRARAGDSPWSFSLYTREPNTNLVTTHATGEISLHPFGQNTPLFVRLHSMNRLIDSSRVDSIANSRESSGLKGFAVYQAFRRVVNYADCYRGVERVFATEHEAAGIVNLLSSKTKDAACDPMLVDNFIQVAGIHVNCLSETNEDEVFVCTGVGEILIGEAFMTRDPKSSRSWGVYSNMDRSVKNKIACDTFVLDRETGKLAVTILSAEFTSVSIAGLARVLKKLNNQADDEKASPDLSLRNDSKVDVNPTPQNTAPVVQPTRQAAAEPGYFVVVQEMLCDLLGIVSEELLPSSNLEEIGVDSLMRTEVLVEIKKRFNVSIDASTLTEIPNIQALVQTIFPDAATAPLTHGVHPSLEIETTDVPDSENNTHVIPTPISDADVHGLIDIAPTLFTDIQRSTSHSEMTQWNGFCESVYPKQMALVTAYVVEAFKSLGVSLDKFEAEGVIPQVPVLKQHGKVRNQLYSILEFSNLIRATDRGFVRTTIPVPTISSDVLHEEIIRLYPQHRSEHHLLKTTGSRLSDCLSGAADPLSLLFQDAEARRLMEDVYTNAPMFKGATNHLAQYLVNLLGRMDTTREINILEIGGGTGGTTKALLNQLTAVPGLRFQYTFTDLSSGLLTLARKKFKHYNFMKYQVLNVEQTPTPDMVGQYDIILSSNCVHATRNLVQSCSNINKLLRPDGILCLIELTRNLFWFDLVFGLLEGWWLFEDGRQHALATEHMWKQTLVQSGFQWVDWTHNDSEESNVLRVITASPTSAVILPPTPGSPLRVMNEETVPYGKNGAVELSADIYYPRDLQPIGKPRPIALLIHGGGHIMLSRRDVRSKQVKMLLDAGFLPVSVDYRLCPEVSLSEGPMHDVCDALSWARNVLPKLSLCRPDIQSDGTQVVAVGWSTGAHLAMTLAWTAEQRGIEPPQAILAFYGPTDYEDPFWSKPNFPYGKSAASPEMSYNLWEGMHETPITAYNPPANQNALGGWMSPADPRSRIALHMNWKGQSLPMLLHGGHFWSAHKDGDCGEDLPVPTLKEIQAVSPLAQIRNGCYKTPTFIIHGTLDDLIPVEQAQRTSQELVTKGVEVELRIVDKAVHLFDIYPGFEKDHAAAQAVQDGYEFLRDHVRY.

An N-terminal acylcarrier protein transacylase domain (SAT) region spans residues 15–254 (LVFGPQIAEI…HHASHITAVQ (240 aa)). The 422-residue stretch at 387–808 (ATPIAITGMG…GSNAALVVKQ (422 aa)) folds into the Ketosynthase family 3 (KS3) domain. Catalysis depends on for beta-ketoacyl synthase activity residues Cys-552, His-687, and His-726. Residues 914-1223 (LCFGGQNGNE…QSLDLGGPQG (310 aa)) form a malonyl-CoA:ACP transacylase (MAT) domain region. Ser-1001 acts as the For acyl/malonyl transferase activity in catalysis. Positions 1295–1423 (KEFVQLLTKQ…GEISLHPFGQ (129 aa)) are N-terminal hotdog fold. In terms of domain architecture, PKS/mFAS DH spans 1295–1602 (KEFVQLLTKQ…FTSVSIAGLA (308 aa)). The tract at residues 1296–1601 (EFVQLLTKQP…EFTSVSIAGL (306 aa)) is product template (PT) domain. The Proton acceptor; for dehydratase activity role is filled by His-1326. A C-terminal hotdog fold region spans residues 1451–1602 (ESSGLKGFAV…FTSVSIAGLA (152 aa)). Catalysis depends on Asp-1509, which acts as the Proton donor; for dehydratase activity. Residues 1615-1629 (EKASPDLSLRNDSKV) are compositionally biased toward basic and acidic residues. The segment at 1615 to 1645 (EKASPDLSLRNDSKVDVNPTPQNTAPVVQPT) is disordered. A compositionally biased stretch (polar residues) spans 1633 to 1645 (PTPQNTAPVVQPT). One can recognise a Carrier domain in the interval 1652 to 1726 (PGYFVVVQEM…ALVQTIFPDA (75 aa)). An O-(pantetheine 4'-phosphoryl)serine modification is found at Ser-1686. The interval 1888–2121 (QHRSEHHLLK…GFQWVDWTHN (234 aa)) is methyltransferase (CMeT) domain. Residues 2151–2496 (RVMNEETVPY…YEFLRDHVRY (346 aa)) form a thioesterase (TE) domain region. Catalysis depends on for thioesterase activity residues Ser-2274 and Asp-2433.

The enzyme catalyses 3 malonyl-CoA + acetyl-CoA + 2 S-adenosyl-L-methionine = 3,5-dimethylorsellinate + 2 S-adenosyl-L-homocysteine + 3 CO2 + 4 CoA. The protein operates within secondary metabolite biosynthesis; terpenoid biosynthesis. Its function is as follows. Non-reducing polyketide synthase; part of the gene cluster that mediates the biosynthesis of andrastins, meroterpenoid compounds that exhibit inhibitory activity against ras farnesyltransferase, suggesting that they could be promising leads for antitumor agents. The first step of the pathway is the synthesis of 3,5-dimethylorsellinic acid (DMOA) by the polyketide synthase adrD via condensation of one acetyl-CoA starter unit with 3 malonyl-CoA units and 2 methylations. DMAO is then converted to farnesyl-DMAO by the prenyltransferase adrG. The methyltransferase adrK catalyzes the methylation of the carboxyl group of farnesyl-DMAO to farnesyl-DMAO methyl ester which is further converted to epoxyfarnesyl-DMAO methyl ester by the FAD-dependent monooxygenase adrH. The terpene cyclase adrI then catalyzes the carbon skeletal rearrangement to generate the andrastin E, the first compound in the pathway having the andrastin scaffold, with the tetracyclic ring system. The post-cyclization tailoring enzymes adrF, adrE, adrJ, and adrA, are involved in the conversion of andrastin E into andrastin A. The short chain dehydrogenase adrF is responsible for the oxidation of the C-3 a hydroxyl group of andrastin E to yield the corresponding ketone, andrastin D. The ketoreductase adrE stereoselectively reduces the carbonyl moiety to reverse the stereochemistry of the C-3 position to yield andrastin F. The acetyltransferase adrJ is the acetyltransferase that attaches the acetyl group to the C-3 hydroxyl group of andrastin F to yield andrastin C. Finally, the cytochrome P450 monooxygenase adrA catalyzes two sequential oxidation reactions of the C-23 methyl group, to generate the corresponding alcohol andrastin B, and aldehyde andrastin A. In Penicillium rubens (strain ATCC 28089 / DSM 1075 / NRRL 1951 / Wisconsin 54-1255) (Penicillium chrysogenum), this protein is Non-reducing polyketide synthase adrD.